The sequence spans 199 residues: Recombination protein RecR (199 aa).

The C4-type zinc finger occupies 57 to 72 (CSICGNITDEDPCAIC). Residues 80–176 (STILVVEQPK…KVTRLAHGLS (97 aa)) enclose the Toprim domain.

This sequence belongs to the RecR family.

May play a role in DNA repair. It seems to be involved in an RecBC-independent recombinational process of DNA repair. It may act with RecF and RecO. In Lacticaseibacillus casei (strain BL23) (Lactobacillus casei), this protein is Recombination protein RecR.